We begin with the raw amino-acid sequence, 123 residues long: Small ribosomal subunit protein uS12cz/uS12cy (123 aa).

It belongs to the universal ribosomal protein uS12 family. As to quaternary structure, part of the 30S ribosomal subunit.

It localises to the plastid. Its subcellular location is the chloroplast. Functionally, with S4 and S5 plays an important role in translational accuracy. Located at the interface of the 30S and 50S subunits. The protein is Small ribosomal subunit protein uS12cz/uS12cy (rps12-A) of Nandina domestica (Heavenly bamboo).